We begin with the raw amino-acid sequence, 251 residues long: 1-(5-phosphoribosyl)-5-[(5-phosphoribosylamino)methylideneamino] imidazole-4-carboxamide isomerase (251 aa).

The active-site Proton acceptor is Asp8. Asp129 acts as the Proton donor in catalysis.

Belongs to the HisA/HisF family.

The protein localises to the cytoplasm. It catalyses the reaction 1-(5-phospho-beta-D-ribosyl)-5-[(5-phospho-beta-D-ribosylamino)methylideneamino]imidazole-4-carboxamide = 5-[(5-phospho-1-deoxy-D-ribulos-1-ylimino)methylamino]-1-(5-phospho-beta-D-ribosyl)imidazole-4-carboxamide. The protein operates within amino-acid biosynthesis; L-histidine biosynthesis; L-histidine from 5-phospho-alpha-D-ribose 1-diphosphate: step 4/9. The sequence is that of 1-(5-phosphoribosyl)-5-[(5-phosphoribosylamino)methylideneamino] imidazole-4-carboxamide isomerase from Desulfosudis oleivorans (strain DSM 6200 / JCM 39069 / Hxd3) (Desulfococcus oleovorans).